Reading from the N-terminus, the 335-residue chain is Glycerol-3-phosphate dehydrogenase [NAD(P)+] (335 aa).

4 residues coordinate NADPH: Ser15, Tyr16, His36, and Lys110. Sn-glycerol 3-phosphate-binding residues include Lys110, Gly139, and Thr141. Ala143 is an NADPH binding site. The sn-glycerol 3-phosphate site is built by Lys195, Asp248, Ser258, Arg259, and Asn260. Lys195 (proton acceptor) is an active-site residue. Arg259 serves as a coordination point for NADPH. NADPH contacts are provided by Val283 and Glu285.

The protein belongs to the NAD-dependent glycerol-3-phosphate dehydrogenase family.

Its subcellular location is the cytoplasm. The catalysed reaction is sn-glycerol 3-phosphate + NAD(+) = dihydroxyacetone phosphate + NADH + H(+). The enzyme catalyses sn-glycerol 3-phosphate + NADP(+) = dihydroxyacetone phosphate + NADPH + H(+). It functions in the pathway membrane lipid metabolism; glycerophospholipid metabolism. In terms of biological role, catalyzes the reduction of the glycolytic intermediate dihydroxyacetone phosphate (DHAP) to sn-glycerol 3-phosphate (G3P), the key precursor for phospholipid synthesis. The sequence is that of Glycerol-3-phosphate dehydrogenase [NAD(P)+] from Haemophilus influenzae (strain ATCC 51907 / DSM 11121 / KW20 / Rd).